The following is a 391-amino-acid chain: Lipoyl synthase, mitochondrial (391 aa).

Residues 1-44 constitute a mitochondrion transit peptide; that stretch reads MVHPHLSRTKRTFFSHSSQMISRHIRKTNSLAFVRALSASETAV. 7 residues coordinate [4Fe-4S] cluster: cysteine 120, cysteine 125, cysteine 131, cysteine 150, cysteine 154, cysteine 157, and serine 365. In terms of domain architecture, Radical SAM core spans 135–354; sequence KKSEATATIM…KEVALEMGFL (220 aa).

It belongs to the radical SAM superfamily. Lipoyl synthase family. It depends on [4Fe-4S] cluster as a cofactor.

The protein localises to the mitochondrion. It carries out the reaction [[Fe-S] cluster scaffold protein carrying a second [4Fe-4S](2+) cluster] + N(6)-octanoyl-L-lysyl-[protein] + 2 oxidized [2Fe-2S]-[ferredoxin] + 2 S-adenosyl-L-methionine + 4 H(+) = [[Fe-S] cluster scaffold protein] + N(6)-[(R)-dihydrolipoyl]-L-lysyl-[protein] + 4 Fe(3+) + 2 hydrogen sulfide + 2 5'-deoxyadenosine + 2 L-methionine + 2 reduced [2Fe-2S]-[ferredoxin]. It functions in the pathway protein modification; protein lipoylation via endogenous pathway; protein N(6)-(lipoyl)lysine from octanoyl-[acyl-carrier-protein]: step 2/2. In terms of biological role, catalyzes the radical-mediated insertion of two sulfur atoms into the C-6 and C-8 positions of the octanoyl moiety bound to the lipoyl domains of lipoate-dependent enzymes, thereby converting the octanoylated domains into lipoylated derivatives. This is Lipoyl synthase, mitochondrial from Clavispora lusitaniae (strain ATCC 42720) (Yeast).